Consider the following 543-residue polypeptide: Glucose-6-phosphate isomerase (543 aa).

Residue Glu353 is the Proton donor of the active site. Catalysis depends on residues His384 and Lys504.

The protein belongs to the GPI family.

It is found in the cytoplasm. The catalysed reaction is alpha-D-glucose 6-phosphate = beta-D-fructose 6-phosphate. The protein operates within carbohydrate biosynthesis; gluconeogenesis. Its pathway is carbohydrate degradation; glycolysis; D-glyceraldehyde 3-phosphate and glycerone phosphate from D-glucose: step 2/4. In terms of biological role, catalyzes the reversible isomerization of glucose-6-phosphate to fructose-6-phosphate. This is Glucose-6-phosphate isomerase from Roseiflexus castenholzii (strain DSM 13941 / HLO8).